The primary structure comprises 1855 residues: Chitin synthase 5 (1855 aa).

Positions 1–778 (MSSAPTTQQN…CWRQIVRAGD (778 aa)) constitute a Myosin motor domain. 95–102 (GESGTGKT) contacts ATP. Asparagine 221, asparagine 520, and asparagine 558 each carry an N-linked (GlcNAc...) asparagine glycan. The tract at residues 585 to 650 (AVQQASVASK…PKSADTQQGA (66 aa)) is disordered. The segment at 658–682 (LDNINKSLTAPNTNPYFFFCLKPND) is actin-binding. N-linked (GlcNAc...) asparagine glycosylation occurs at asparagine 662. 2 helical membrane-spanning segments follow: residues 887–907 (WLVLVYVLTWWCPDWAIRIIG) and 922–942 (VAINFIIWLSCAFVVFFMVGF). One can recognise a Cytochrome b5 heme-binding domain in the interval 950-1008 (QHVFSPSELTSYDGKNSDAYVAIRGNVFDLGAFIPQHYPSIVPASALEKYAGTDATNLF). N-linked (GlcNAc...) asparagine glycans are attached at residues asparagine 1037 and asparagine 1061. The chain crosses the membrane as a helical span at residues 1199 to 1219 (ILLAVSIMLVSVICFKFLAAL). N-linked (GlcNAc...) asparagine glycans are attached at residues asparagine 1422, asparagine 1456, and asparagine 1562. The next 3 membrane-spanning stretches (helical) occupy residues 1587–1607 (FVVFLDLLSTIVQPVIVGYIV), 1621–1641 (ATTAFILIAAIYGLQAIIFIV), and 1650–1670 (WMIIYILATPIFSFCLPLIAF). N-linked (GlcNAc...) asparagine glycosylation is found at asparagine 1755 and asparagine 1767. In terms of domain architecture, DEK-C spans 1797–1852 (MPNDDAILAEIREILATADLMTVTKKSIKAELERRFGVPMDSRRQYIGSATEAILS).

This sequence in the N-terminal section; belongs to the TRAFAC class myosin-kinesin ATPase superfamily. Myosin family. It in the C-terminal section; belongs to the chitin synthase family. Class V subfamily.

The protein resides in the apical cell membrane. The protein localises to the cell septum. It localises to the cell tip. The catalysed reaction is [(1-&gt;4)-N-acetyl-beta-D-glucosaminyl](n) + UDP-N-acetyl-alpha-D-glucosamine = [(1-&gt;4)-N-acetyl-beta-D-glucosaminyl](n+1) + UDP + H(+). Functionally, polymerizes chitin, a structural polymer of the cell wall and septum, by transferring the sugar moiety of UDP-GlcNAc to the non-reducing end of the growing chitin polymer. This Zymoseptoria tritici (strain CBS 115943 / IPO323) (Speckled leaf blotch fungus) protein is Chitin synthase 5.